A 214-amino-acid chain; its full sequence is Probable GTP-binding protein EngB (214 aa).

An EngB-type G domain is found at 40–212 (SLPEIVFVGK…KASFAQCIKH (173 aa)). Residues 48–55 (GKSNVGKS), 75–79 (GRTRQ), 93–96 (DLPG), 160–163 (TKSD), and 191–193 (VSS) each bind GTP. Mg(2+)-binding residues include S55 and T77.

Belongs to the TRAFAC class TrmE-Era-EngA-EngB-Septin-like GTPase superfamily. EngB GTPase family. Mg(2+) serves as cofactor.

Necessary for normal cell division and for the maintenance of normal septation. In Rickettsia prowazekii (strain Madrid E), this protein is Probable GTP-binding protein EngB.